A 264-amino-acid polypeptide reads, in one-letter code: Eukaryotic translation initiation factor 6 (264 aa).

It belongs to the eIF-6 family. Monomer. Associates with the 60S ribosomal subunit.

It localises to the cytoplasm. It is found in the nucleus. Its subcellular location is the nucleolus. In terms of biological role, binds to the 60S ribosomal subunit and prevents its association with the 40S ribosomal subunit to form the 80S initiation complex in the cytoplasm. May also be involved in ribosome biogenesis. The polypeptide is Eukaryotic translation initiation factor 6 (Toxoplasma gondii (strain ATCC 50861 / VEG)).